Consider the following 239-residue polypeptide: Lipid transferase CIDEC (239 aa).

The segment at 1 to 35 is required for liquid-liquid phase separation (LLPS); sequence MDYAMKSLSLLYPRSLSRHVAVSTAVVTQQLVSKP. The CIDE-N domain occupies 41–118; it reads RARPCRVSTA…VLLKGQKWKP (78 aa). The short motif at 123-126 is the RKKR polybasic motif element; the sequence is RKKR.

Belongs to the CIDE family. Homodimer. Homooligomer; undergoes liquid-liquid phase separation (LLPS) via its N-terminus, facilitating lipid droplet fusion, occurs at the lipid droplet contact sites. Interacts with CIDEA. Interacts with PLIN1. Interacts with NFAT5; this interaction is direct and retains NFAT5 in the cytoplasm. Interacts with CEBPB. Interacts with isoform CLSTN3beta of CLSTN3; inhibiting the lipid transferase activity of CIDEC. Ubiquitinated and targeted to proteasomal degradation, resulting in a short half-life (about 15 minutes in 3T3-L1 cells). Protein stability depends on triaclyglycerol synthesis, fatty acid availability and lipid droplet formation. Expressed almost exclusively in adipose tissue, including subcutaneous and epididymal white adipose tissue (at protein level). Although abundantly present in brown adipose tissue at the mRNA level, the protein is almost undetectable in this tissue, or at moderate levels. Expressed in the mammary gland, in stromal adipose tissue, but becomes undetectable at the end of pregnancy and during lactation (at protein level). Expressed at low levels in skeletal muscle and heart.

It localises to the lipid droplet. It is found in the endoplasmic reticulum. The protein localises to the nucleus. The catalysed reaction is a triacyl-sn-glycerol(in) = a triacyl-sn-glycerol(out). Its function is as follows. Lipid transferase specifically expressed in white adipose tissue, which promotes unilocular lipid droplet formation by mediating lipid droplet fusion. Lipid droplet fusion promotes their enlargement, restricting lipolysis and favoring lipid storage. Localizes on the lipid droplet surface, at focal contact sites between lipid droplets, and mediates atypical lipid droplet fusion by undergoing liquid-liquid phase separation (LLPS) and promoting directional net neutral lipid transfer from the smaller to larger lipid droplets. The transfer direction may be driven by the internal pressure difference between the contacting lipid droplet pair. Its role in neutral lipid transfer and lipid droplet enlargement is activated by the interaction with PLIN1. May also act as a CEBPB coactivator in the white adipose tissue to control the expression of a subset of CEBPB downstream target genes, including SOCS1, SOCS3, TGFB1, TGFBR1, ID2 and XDH. When overexpressed in preadipocytes, induces apoptosis or increases cell susceptibility to apoptosis induced by serum deprivation or TGFB treatment. This is Lipid transferase CIDEC from Mus musculus (Mouse).